Reading from the N-terminus, the 510-residue chain is MEVKDIFSYDWSYLLPEFIILGFATFLSLLDLFAGKRLGKQVIGWLSFLGTVIAAIFVIINMNALNKPYSYMIDMIRIDDYGNAFKLIFLAGTAFAILISLSYLKAGEVQHRGEYYYLLLTGLLGAMVMASSADLITLFVGLELLSLSSYVLVGLRKKSRLSNESAFKYVVSGSIATAVLLFGMSYVYGLAGTTHIYEISFRLAEAGMAGYQFLVYTAFAFLAVGLAFKISAAPNHMWAPDVYQGAPTPVTVFLAVVSKAAGFALIFRVMMISFFNVSDGTGSGRFFFEEGSLYLGLMAAASMIIGNTMALRQTNVKRMMAYSGIAQAGYLLVPFVPPTSLFFSEVIFYLFGYLLVSFGAFAVIMVVSREQETEDLKGFAGLYHRSPVMAIAMSIFLLSLAGIPITVGFFGKFYLFMGTLVVENYWLAAIMIITSVISYYYYFGIIRQMYMRPGTTEAPMVVPKGIWTFILIMAIATVFFGAFPGLVTDYIQIHFNPSFDFGNMLSPSSQ.

The next 14 membrane-spanning stretches (helical) occupy residues Leu14–Ala34, Val42–Met62, Ala84–Leu104, Gly113–Ala133, Leu135–Leu155, Val170–Leu190, Met208–Phe228, Pro247–Phe267, Phe286–Gly306, Ser323–Phe343, Val346–Val366, Ala390–Phe410, Trp426–Ile446, and Ile466–Leu486.

The protein belongs to the complex I subunit 2 family. In terms of assembly, NDH-1 is composed of 14 different subunits. Subunits NuoA, H, J, K, L, M, N constitute the membrane sector of the complex.

It localises to the cell membrane. It catalyses the reaction a quinone + NADH + 5 H(+)(in) = a quinol + NAD(+) + 4 H(+)(out). NDH-1 shuttles electrons from NADH, via FMN and iron-sulfur (Fe-S) centers, to quinones in the respiratory chain. The immediate electron acceptor for the enzyme in this species is believed to be a menaquinone. Couples the redox reaction to proton translocation (for every two electrons transferred, four hydrogen ions are translocated across the cytoplasmic membrane), and thus conserves the redox energy in a proton gradient. The chain is NADH-quinone oxidoreductase subunit N from Brevibacillus brevis (strain 47 / JCM 6285 / NBRC 100599).